The sequence spans 447 residues: Phosphoglucosamine mutase (447 aa).

S106 serves as the catalytic Phosphoserine intermediate. Positions 106, 245, 247, and 249 each coordinate Mg(2+). A Phosphoserine modification is found at S106.

The protein belongs to the phosphohexose mutase family. The cofactor is Mg(2+). In terms of processing, activated by phosphorylation.

The enzyme catalyses alpha-D-glucosamine 1-phosphate = D-glucosamine 6-phosphate. Functionally, catalyzes the conversion of glucosamine-6-phosphate to glucosamine-1-phosphate. This chain is Phosphoglucosamine mutase, found in Cupriavidus metallidurans (strain ATCC 43123 / DSM 2839 / NBRC 102507 / CH34) (Ralstonia metallidurans).